Here is a 122-residue protein sequence, read N- to C-terminus: uncharacterized protein (122 aa).

This is an uncharacterized protein from Arabidopsis thaliana (Mouse-ear cress).